The chain runs to 783 residues: FYN-binding protein 1 (783 aa).

Composition is skewed to polar residues over residues 1-18 (MAKY…SVNS) and 25-45 (GPNS…QGNA). The segment at 1-502 (MAKYNTGGNP…KEKKEQEIKK (502 aa)) is disordered. Residue Lys3 is modified to N6-acetyllysine. Phosphoserine is present on residues Ser28 and Ser46. Residues 69–79 (SSEEKPDKEPK) show a composition bias toward basic and acidic residues. A Phosphoserine modification is found at Ser225. Composition is skewed to basic and acidic residues over residues 240–252 (PARE…DHAG) and 278–290 (NGEE…KIDA). The residue at position 329 (Ser329) is a Phosphoserine. Pro residues predominate over residues 345-363 (KPLPPLFTLGPPPPKPNRP). Positions 348 to 448 (PPLFTLGPPP…QDGVTHSDGA (101 aa)) are interaction with SKAP1. Over residues 374-387 (TSSGNSTSKGQTSY) the composition is skewed to polar residues. Positions 392–424 (LPPPPPSHPASQPPLPASHPSQPPVPSLPPRNI) are enriched in pro residues. Residues 451–465 (LDEEQDSEGETYEDI) show a composition bias toward acidic residues. Positions 456–507 (DSEGETYEDIEASKEREKKREKEEKKRLELEKKEQKEKEKKEQEIKKKFKLT) form a coiled coil. Phosphoserine is present on Ser457. Positions 462-465 (YEDI) match the SH2-binding motif. Over residues 466–501 (EASKEREKKREKEEKKRLELEKKEQKEKEKKEQEIK) the composition is skewed to basic and acidic residues. A Nuclear localization signal motif is present at residues 469-505 (KEREKKREKEEKKRLELEKKEQKEKEKKEQEIKKKFK). The region spanning 511 to 572 (QVIHLAKACC…KTTAVEIDYD (62 aa)) is the SH3 1 domain. Tyr571 is subject to Phosphotyrosine. A phosphoserine mark is found at Ser573 and Ser580. An SH2-binding; to LCP2 motif is present at residues 595–598 (YDDV). The interval 598-678 (VAEQDDISSH…GTNVGKAKTE (81 aa)) is disordered. Acidic residues-rich tracts occupy residues 620–635 (PDDD…DADD) and 646–656 (MGDEVYDDVDT). An SH2-binding; to FYN motif is present at residues 625 to 628 (YDGI). The residue at position 651 (Tyr651) is a Phosphotyrosine. The Nuclear localization signal motif lies at 674 to 700 (KAKTEEKDLKKLKKQEKEEKDFRKKFK). One can recognise an SH3 2 domain in the interval 700-768 (KYDGEIRVLY…LRSYLADNDG (69 aa)).

In terms of assembly, part of a complex consisting of SKAP2, FYB1 and PTPNS1. Part of a complex consisting of SKAP2, FYB1 and LILRB3. Part of a complex consisting of SKAP1, FYB1 and CLNK. Interacts with CLNK (via its SH2 domain); this interaction allows SKAP1 and FYB1 to recruit FYN to the complex, thus promoting the phosphorylation of CLNK by FYN. Interacts with FYN. Interacts with LCP2. Interacts with SKAP1. Interacts with SKAP2. Interacts with FASLG. Interacts with EVL. Interacts with TMEM47. Interacts with LCK. Post-translationally, T-cell receptor ligation leads to increased tyrosine phosphorylation. In terms of tissue distribution, expressed in hematopoietic tissues such as myeloid and T-cells, spleen and thymus. Not expressed in B-cells, nor in non-lymphoid tissues.

It is found in the cytoplasm. The protein localises to the nucleus. The protein resides in the cell junction. Acts as an adapter protein of the FYN and LCP2 signaling cascades in T-cells. May play a role in linking T-cell signaling to remodeling of the actin cytoskeleton. Modulates the expression of IL2. Involved in platelet activation. Prevents the degradation of SKAP1 and SKAP2. May be involved in high affinity immunoglobulin epsilon receptor signaling in mast cells. The sequence is that of FYN-binding protein 1 from Homo sapiens (Human).